Reading from the N-terminus, the 188-residue chain is uncharacterized protein (188 aa).

A helical membrane pass occupies residues 121-139 (IWLYGGASLITTFINLGLV).

It to B.subtilis YwjB.

The protein localises to the membrane. This is an uncharacterized protein from Bacillus subtilis (strain 168).